Here is a 571-residue protein sequence, read N- to C-terminus: Proline--tRNA ligase (571 aa).

This sequence belongs to the class-II aminoacyl-tRNA synthetase family. ProS type 1 subfamily. In terms of assembly, homodimer.

It localises to the cytoplasm. The enzyme catalyses tRNA(Pro) + L-proline + ATP = L-prolyl-tRNA(Pro) + AMP + diphosphate. Catalyzes the attachment of proline to tRNA(Pro) in a two-step reaction: proline is first activated by ATP to form Pro-AMP and then transferred to the acceptor end of tRNA(Pro). As ProRS can inadvertently accommodate and process non-cognate amino acids such as alanine and cysteine, to avoid such errors it has two additional distinct editing activities against alanine. One activity is designated as 'pretransfer' editing and involves the tRNA(Pro)-independent hydrolysis of activated Ala-AMP. The other activity is designated 'posttransfer' editing and involves deacylation of mischarged Ala-tRNA(Pro). The misacylated Cys-tRNA(Pro) is not edited by ProRS. This Buchnera aphidicola subsp. Schizaphis graminum (strain Sg) protein is Proline--tRNA ligase.